The following is a 145-amino-acid chain: Brain and acute leukemia cytoplasmic protein (145 aa).

A lipid anchor (N-myristoyl glycine) is attached at Gly2. Cys3 is lipidated: S-palmitoyl cysteine. The interaction with CAMK2A stretch occupies residues 3-35 (CGGSRADAIEPRYYESWTRETESTWLTYTDSDA). The tract at residues 36 to 113 (LPSAAATDSG…GLWTTEAKRD (78 aa)) is disordered. The segment covering 83–106 (CGTQCPNSQSLSSGPLTQKQNGLW) has biased composition (polar residues).

As to quaternary structure, interacts with CAMK2A. Post-translationally, palmitoylation and myristoylation target the protein to the lipid rafts. As to expression, predominantly expressed in the brain (at protein level). Within the brain, found in most of forebrain structures, including the cerebral cortex, hippocampal formation, olfactory bulb, anterior olfactory nuclei, piriform cortex, tenia tecta and amygdaloid nuclei. Not detected in glial cells.

It is found in the cytoplasm. Its subcellular location is the synapse. The protein localises to the synaptosome. It localises to the membrane raft. The protein resides in the postsynaptic density. Functionally, may play a synaptic role at the postsynaptic lipid rafts possibly through interaction with CAMK2A. The sequence is that of Brain and acute leukemia cytoplasmic protein (Baalc) from Rattus norvegicus (Rat).